The following is a 501-amino-acid chain: Lysine--tRNA ligase (501 aa).

Mg(2+) contacts are provided by Glu-411 and Glu-418.

It belongs to the class-II aminoacyl-tRNA synthetase family. As to quaternary structure, homodimer. Mg(2+) serves as cofactor.

Its subcellular location is the cytoplasm. The enzyme catalyses tRNA(Lys) + L-lysine + ATP = L-lysyl-tRNA(Lys) + AMP + diphosphate. The sequence is that of Lysine--tRNA ligase from Magnetococcus marinus (strain ATCC BAA-1437 / JCM 17883 / MC-1).